The chain runs to 155 residues: DNA-directed RNA polymerases I, II, and III subunit RPABC2 (155 aa).

A compositionally biased stretch (acidic residues) spans 1-19 (MSDYEEAFNDGNENFEDFD). The segment at 1-57 (MSDYEEAFNDGNENFEDFDVEHFSDEETYEEKPQFKDGETTDANGKTIVTGGNGPED) is disordered. Over residues 20-39 (VEHFSDEETYEEKPQFKDGE) the composition is skewed to basic and acidic residues. The residue at position 24 (serine 24) is a Phosphoserine. Residues 111–132 (LEGETDPLRIAMKELAEKKIPL) are leucine-zipper.

The protein belongs to the archaeal Rpo6/eukaryotic RPB6 RNA polymerase subunit family. As to quaternary structure, component of the RNA polymerase I (Pol I), RNA polymerase II (Pol II) and RNA polymerase III (Pol III) complexes. Component of the RNA polymerase I (Pol I) complex consisting of 14 subunits: RPA135, RPA190, RPC40, RPA14, RPB5, RPO26, RPA43, RPB8, RPA12, RPB10, RPC19, RPC10, RPA49 and RPA34. The complex is composed of a horseshoe-shaped core containing ten subunits (RPA135, RPA190, RPB5, RPO26, RPB8, RPB10, RPC10, RPA12, RPC19 and RPC40) where RPA135 and RPA190 form the DNA-binding cleft. Outside of the core, RPA14 and RPA43 form the stalk that mediates interactions with transcription initiation factors and newly synthesized RNA. Component of the RNA polymerase II (Pol II) complex consisting of 12 subunits: RPO21, RPB2, RPB3, RPB4, RPB5, RPO26, RPB7, RPB8, RPB9, RPB10 and RPC10. Component of the RNA polymerase III (Pol III) complex consisting of 17 subunits.

The protein localises to the cytoplasm. Its subcellular location is the nucleus. In terms of biological role, DNA-dependent RNA polymerases catalyze the transcription of DNA into RNA using the four ribonucleoside triphosphates as substrates. Common component of RNA polymerases I, II and III which synthesize ribosomal RNA precursors, mRNA precursors and many functional non-coding RNAs, and small RNAs, such as 5S rRNA and tRNAs, respectively. Pol II is the central component of the basal RNA polymerase II transcription machinery. RNA polymerases are composed of mobile elements that move relative to each other. In Pol II, RPB6 is part of the clamp element and together with parts of RPB1 and RPB2 forms a pocket to which the RPB4-RPB7 subcomplex binds. The sequence is that of DNA-directed RNA polymerases I, II, and III subunit RPABC2 (RPO26) from Saccharomyces cerevisiae (strain ATCC 204508 / S288c) (Baker's yeast).